The primary structure comprises 392 residues: Selenide, water dikinase 1 (392 aa).

Cys-31 is a catalytic residue. Residues Lys-32, 67–69 (GMD), Asp-87, Asp-110, and 161–164 (GGQT) contribute to the ATP site. Residue Asp-69 participates in Mg(2+) binding. Asp-110 serves as a coordination point for Mg(2+). Asp-265 contributes to the Mg(2+) binding site.

It belongs to the selenophosphate synthase 1 family. Class II subfamily. In terms of assembly, homodimer. It depends on Mg(2+) as a cofactor.

The protein localises to the cell membrane. Its subcellular location is the nucleus membrane. The enzyme catalyses hydrogenselenide + ATP + H2O = selenophosphate + AMP + phosphate + 2 H(+). In terms of biological role, synthesizes selenophosphate from selenide and ATP. In Xenopus laevis (African clawed frog), this protein is Selenide, water dikinase 1 (sephs1).